We begin with the raw amino-acid sequence, 458 residues long: UDP-N-acetylmuramoylalanine--D-glutamate ligase (458 aa).

Residue 124–130 (GSDGKTT) participates in ATP binding.

Belongs to the MurCDEF family.

The protein resides in the cytoplasm. The enzyme catalyses UDP-N-acetyl-alpha-D-muramoyl-L-alanine + D-glutamate + ATP = UDP-N-acetyl-alpha-D-muramoyl-L-alanyl-D-glutamate + ADP + phosphate + H(+). The protein operates within cell wall biogenesis; peptidoglycan biosynthesis. In terms of biological role, cell wall formation. Catalyzes the addition of glutamate to the nucleotide precursor UDP-N-acetylmuramoyl-L-alanine (UMA). This Clostridium novyi (strain NT) protein is UDP-N-acetylmuramoylalanine--D-glutamate ligase.